Consider the following 889-residue polypeptide: DNA-directed RNA polymerase subunit Rpo1N (889 aa).

Residues Cys-62, Cys-65, Cys-72, His-75, Cys-102, Cys-105, Cys-149, and Cys-152 each coordinate Zn(2+). Residues Asp-466, Asp-468, and Asp-470 each contribute to the Mg(2+) site.

Belongs to the RNA polymerase beta' chain family. In terms of assembly, part of the RNA polymerase complex. It depends on Mg(2+) as a cofactor. Zn(2+) serves as cofactor.

It localises to the cytoplasm. It carries out the reaction RNA(n) + a ribonucleoside 5'-triphosphate = RNA(n+1) + diphosphate. Its function is as follows. DNA-dependent RNA polymerase (RNAP) catalyzes the transcription of DNA into RNA using the four ribonucleoside triphosphates as substrates. Forms the clamp head domain. This is DNA-directed RNA polymerase subunit Rpo1N from Methanococcus vannielii (strain ATCC 35089 / DSM 1224 / JCM 13029 / OCM 148 / SB).